Consider the following 545-residue polypeptide: Chaperonin GroEL (545 aa).

Residues Thr30–Pro33, Lys51, Asp87–Thr91, Gly415, Asn479–Ala481, and Asp495 contribute to the ATP site. Residues Lys526 to Met545 are disordered.

This sequence belongs to the chaperonin (HSP60) family. Forms a cylinder of 14 subunits composed of two heptameric rings stacked back-to-back. Interacts with the co-chaperonin GroES.

The protein localises to the cytoplasm. It catalyses the reaction ATP + H2O + a folded polypeptide = ADP + phosphate + an unfolded polypeptide.. Together with its co-chaperonin GroES, plays an essential role in assisting protein folding. The GroEL-GroES system forms a nano-cage that allows encapsulation of the non-native substrate proteins and provides a physical environment optimized to promote and accelerate protein folding. The sequence is that of Chaperonin GroEL from Paracidovorax citrulli (strain AAC00-1) (Acidovorax citrulli).